The following is a 450-amino-acid chain: Cysteine protease ATG4C (450 aa).

Catalysis depends on Cys-112, which acts as the Nucleophile. Active-site residues include Asp-336 and His-338.

Belongs to the peptidase C54 family.

It localises to the cytoplasm. It catalyses the reaction [protein]-C-terminal L-amino acid-glycyl-phosphatidylethanolamide + H2O = [protein]-C-terminal L-amino acid-glycine + a 1,2-diacyl-sn-glycero-3-phosphoethanolamine. Its function is as follows. Cysteine protease that plays a key role in autophagy by mediating both proteolytic activation and delipidation of ATG8 family proteins. The protease activity is required for proteolytic activation of ATG8 family proteins: cleaves the C-terminal amino acid of ATG8 proteins to reveal a C-terminal glycine. Exposure of the glycine at the C-terminus is essential for ATG8 proteins conjugation to phosphatidylethanolamine (PE) and insertion to membranes, which is necessary for autophagy. In addition to the protease activity, also mediates delipidation of ATG8 family proteins. Catalyzes delipidation of PE-conjugated forms of ATG8 proteins during macroautophagy. The chain is Cysteine protease ATG4C from Xenopus laevis (African clawed frog).